The primary structure comprises 276 residues: NH(3)-dependent NAD(+) synthetase (276 aa).

43-50 (GISGGVDS) serves as a coordination point for ATP. Aspartate 49 is a binding site for Mg(2+). Arginine 146 lines the deamido-NAD(+) pocket. Residue threonine 166 participates in ATP binding. Glutamate 171 provides a ligand contact to Mg(2+). Lysine 179 and aspartate 186 together coordinate deamido-NAD(+). Lysine 195 and threonine 217 together coordinate ATP. Residue 266-267 (HK) coordinates deamido-NAD(+).

This sequence belongs to the NAD synthetase family. Homodimer.

It catalyses the reaction deamido-NAD(+) + NH4(+) + ATP = AMP + diphosphate + NAD(+) + H(+). It participates in cofactor biosynthesis; NAD(+) biosynthesis; NAD(+) from deamido-NAD(+) (ammonia route): step 1/1. In terms of biological role, catalyzes the ATP-dependent amidation of deamido-NAD to form NAD. Uses ammonia as a nitrogen source. This Psychromonas ingrahamii (strain DSM 17664 / CCUG 51855 / 37) protein is NH(3)-dependent NAD(+) synthetase.